The chain runs to 191 residues: NAD(P)H-quinone oxidoreductase subunit 6, chloroplastic (191 aa).

The next 5 helical transmembrane spans lie at 10-30, 32-52, 61-81, 89-109, and 153-173; these read TIFL…ILLT, IVYS…LYLL, AQIL…VMLI, FFVY…SIFL, and FLLP…GAIT.

The protein belongs to the complex I subunit 6 family. In terms of assembly, NDH is composed of at least 16 different subunits, 5 of which are encoded in the nucleus.

The protein localises to the plastid. The protein resides in the chloroplast thylakoid membrane. It catalyses the reaction a plastoquinone + NADH + (n+1) H(+)(in) = a plastoquinol + NAD(+) + n H(+)(out). It carries out the reaction a plastoquinone + NADPH + (n+1) H(+)(in) = a plastoquinol + NADP(+) + n H(+)(out). NDH shuttles electrons from NAD(P)H:plastoquinone, via FMN and iron-sulfur (Fe-S) centers, to quinones in the photosynthetic chain and possibly in a chloroplast respiratory chain. The immediate electron acceptor for the enzyme in this species is believed to be plastoquinone. Couples the redox reaction to proton translocation, and thus conserves the redox energy in a proton gradient. This is NAD(P)H-quinone oxidoreductase subunit 6, chloroplastic (ndhG) from Marchantia polymorpha (Common liverwort).